The primary structure comprises 541 residues: CTP synthase (541 aa).

The amidoligase domain stretch occupies residues 1 to 265 (MTRFIFITGG…DAVVCRHFGL (265 aa)). CTP is bound at residue Ser13. Ser13 serves as a coordination point for UTP. 14 to 19 (SLGKGL) contributes to the ATP binding site. Tyr54 provides a ligand contact to L-glutamine. Residue Asp71 participates in ATP binding. 2 residues coordinate Mg(2+): Asp71 and Glu139. Residues 146-148 (DIE), 186-191 (KTKPTQ), and Lys222 contribute to the CTP site. UTP-binding positions include 186-191 (KTKPTQ) and Lys222. A Glutamine amidotransferase type-1 domain is found at 290 to 540 (TIAIVGKYIS…IAAAVRQSRL (251 aa)). Gly352 contributes to the L-glutamine binding site. Residue Cys379 is the Nucleophile; for glutamine hydrolysis of the active site. L-glutamine is bound by residues 380 to 383 (FGMQ), Glu403, and Arg468. Catalysis depends on residues His513 and Glu515.

It belongs to the CTP synthase family. Homotetramer.

It carries out the reaction UTP + L-glutamine + ATP + H2O = CTP + L-glutamate + ADP + phosphate + 2 H(+). It catalyses the reaction L-glutamine + H2O = L-glutamate + NH4(+). The catalysed reaction is UTP + NH4(+) + ATP = CTP + ADP + phosphate + 2 H(+). Its pathway is pyrimidine metabolism; CTP biosynthesis via de novo pathway; CTP from UDP: step 2/2. With respect to regulation, allosterically activated by GTP, when glutamine is the substrate; GTP has no effect on the reaction when ammonia is the substrate. The allosteric effector GTP functions by stabilizing the protein conformation that binds the tetrahedral intermediate(s) formed during glutamine hydrolysis. Inhibited by the product CTP, via allosteric rather than competitive inhibition. In terms of biological role, catalyzes the ATP-dependent amination of UTP to CTP with either L-glutamine or ammonia as the source of nitrogen. Regulates intracellular CTP levels through interactions with the four ribonucleotide triphosphates. In Paramagnetospirillum magneticum (strain ATCC 700264 / AMB-1) (Magnetospirillum magneticum), this protein is CTP synthase.